The chain runs to 114 residues: ATP-dependent Clp protease adapter protein ClpS (114 aa).

The protein belongs to the ClpS family. Binds to the N-terminal domain of the chaperone ClpA.

Involved in the modulation of the specificity of the ClpAP-mediated ATP-dependent protein degradation. The chain is ATP-dependent Clp protease adapter protein ClpS from Bdellovibrio bacteriovorus (strain ATCC 15356 / DSM 50701 / NCIMB 9529 / HD100).